A 673-amino-acid chain; its full sequence is UvrABC system protein B (673 aa).

The Helicase ATP-binding domain maps to 28–414 (ASILQNKRSQ…EAGGEIVEQL (387 aa)). Residue 41–48 (GITGSGKT) participates in ATP binding. Positions 94–117 (YYDYYQPEAYVPRTDTYIEKDMSI) match the Beta-hairpin motif. The Helicase C-terminal domain occupies 433–595 (QVDDCLAEIR…ITPRTVKREI (163 aa)). The UVR domain maps to 633–668 (RLKIKECEKEMKKAAKEFRFEEAADWRDQMRRYQQI).

This sequence belongs to the UvrB family. In terms of assembly, forms a heterotetramer with UvrA during the search for lesions. Interacts with UvrC in an incision complex.

The protein localises to the cytoplasm. Its function is as follows. The UvrABC repair system catalyzes the recognition and processing of DNA lesions. A damage recognition complex composed of 2 UvrA and 2 UvrB subunits scans DNA for abnormalities. Upon binding of the UvrA(2)B(2) complex to a putative damaged site, the DNA wraps around one UvrB monomer. DNA wrap is dependent on ATP binding by UvrB and probably causes local melting of the DNA helix, facilitating insertion of UvrB beta-hairpin between the DNA strands. Then UvrB probes one DNA strand for the presence of a lesion. If a lesion is found the UvrA subunits dissociate and the UvrB-DNA preincision complex is formed. This complex is subsequently bound by UvrC and the second UvrB is released. If no lesion is found, the DNA wraps around the other UvrB subunit that will check the other stand for damage. This is UvrABC system protein B from Protochlamydia amoebophila (strain UWE25).